Consider the following 480-residue polypeptide: MELHIDEKRLLKIFQDNNRDEFNLNELEKFMPKEKILRVSLWLKGKNLVETEEKVKKIIKLIKEEEFPERKIANYLKQHNIKEIEIKNLKDILPKEEINAALGAIKRKGIARIEKGKIIFDNLDYKDVEEQLLQKIKENKYLDDFSEEEKKIIDILKKRGYVDFDEEKEIKIKLTEKGKEFIKNPIEIEEEITQLTRDIIISGKWKKAYIRPYDVKVPTKPIYPAKVHPLTRIIREVKEILLAMGFKEVKSPIVETEFWNFDMLFEPQDHPAREMQDTFFLKYPNEGDIPEDLLSKVKEVHERCWKYKFDENVSRRLILRTHTTASSIRYLASLSDEEKNKPHKVFCIDRVFRNEAIDYKHLPEFYQCEGIIMDDNVNFNNLIGVLKEFLNRLGFEKVRFRPAYFPFTEPSLEAEVYLEGKGWLEILGAGIFRPEVLEPIGIEKPVLAWGIGFSRLAMLRYGLTDIRDLHKNDLDWLKRV.

L-phenylalanine is bound by residues Thr-324 and Phe-407. Glu-409 lines the Mg(2+) pocket. Phe-432 contacts L-phenylalanine.

The protein belongs to the class-II aminoacyl-tRNA synthetase family. Phe-tRNA synthetase alpha subunit type 2 subfamily. In terms of assembly, tetramer of two alpha and two beta subunits. Requires Mg(2+) as cofactor.

Its subcellular location is the cytoplasm. The catalysed reaction is tRNA(Phe) + L-phenylalanine + ATP = L-phenylalanyl-tRNA(Phe) + AMP + diphosphate + H(+). In Methanocaldococcus jannaschii (strain ATCC 43067 / DSM 2661 / JAL-1 / JCM 10045 / NBRC 100440) (Methanococcus jannaschii), this protein is Phenylalanine--tRNA ligase alpha subunit.